A 222-amino-acid polypeptide reads, in one-letter code: MAAPLTPNAQAYGMLSERTRRRMSDRLRQHGISDERVLSAMHEVPRHLFVDQALATRAYDDVSLPIGHGQTISQPLTVARMTELLIQGRQPGKILEVGTGCGYQTAVLLKTGAEVYSIERLGAILDQARRNLRAAKLVHARLVHGDGNAGLPEAAPFDGIIITAAARAVPAPLVDQLAEGGRMVLPLGDAEQHLWLLEKTAQGLQKTRLDPVKFVPLLGGRG.

Ser73 is an active-site residue.

Belongs to the methyltransferase superfamily. L-isoaspartyl/D-aspartyl protein methyltransferase family.

Its subcellular location is the cytoplasm. The catalysed reaction is [protein]-L-isoaspartate + S-adenosyl-L-methionine = [protein]-L-isoaspartate alpha-methyl ester + S-adenosyl-L-homocysteine. Its function is as follows. Catalyzes the methyl esterification of L-isoaspartyl residues in peptides and proteins that result from spontaneous decomposition of normal L-aspartyl and L-asparaginyl residues. It plays a role in the repair and/or degradation of damaged proteins. This chain is Protein-L-isoaspartate O-methyltransferase, found in Chromobacterium violaceum (strain ATCC 12472 / DSM 30191 / JCM 1249 / CCUG 213 / NBRC 12614 / NCIMB 9131 / NCTC 9757 / MK).